We begin with the raw amino-acid sequence, 765 residues long: Mitochondrial 15S rRNA processing factor CCM1 (765 aa).

The N-terminal 63 residues, 1–63 (MIRLIRGNNV…ITDRNQTSRT (63 aa)), are a transit peptide targeting the mitochondrion. 2 disordered regions span residues 26–67 (LTNK…VGVS) and 92–114 (LKPE…QLPP). Basic and acidic residues predominate over residues 42 to 56 (SNKEGGDIKQSRITD). PPR repeat units follow at residues 274–308 (KIDH…NIEI), 309–344 (SKMI…SQKT), 347–381 (DEKV…GMNV), 382–417 (NQNL…GWVP), and 418–452 (NLQT…NSVT). The disordered stretch occupies residues 585 to 609 (PQQDEPTETVTATEQQNTSSNTSVI). Residues 592–609 (ETVTATEQQNTSSNTSVI) are compositionally biased toward polar residues. Residues 631 to 661 (DSYLYNLAIKAAGKFKNYGFAQEILHERGQF) form a PPR 6 repeat.

Belongs to the CCM1 family. As to quaternary structure, binds to mitochondrial small subunit 15S rRNA.

Its subcellular location is the mitochondrion. Its function is as follows. Regulates mitochondrial small subunit maturation by controlling 15S rRNA 5'-end processing. Localizes to the 5' precursor of the 15S rRNA in a position that is subsequently occupied by mS47 in the mature yeast mtSSU. Uses structure and sequence-specific RNA recognition, binding to a single-stranded region of the precursor and specifically recognizing bases -6 to -1. The exchange of Ccm1 for mS47 is coupled to the irreversible removal of precursor rRNA that is accompanied by conformational changes of the mitoribosomal proteins uS5m and mS26. These conformational changes signal completion of 5'-end rRNA processing through protection of the mature 5'-end of the 15S rRNA and stabilization of mS47. The removal of the 5' precursor together with the dissociation of Ccm1 may be catalyzed by the 5'-3' exoribonuclease Pet127. Involved in the specific removal of group I introns in mitochondrial encoded transcripts. This is Mitochondrial 15S rRNA processing factor CCM1 (CCM1) from Candida dubliniensis (strain CD36 / ATCC MYA-646 / CBS 7987 / NCPF 3949 / NRRL Y-17841) (Yeast).